Consider the following 247-residue polypeptide: MSRFGVFIIGVLFFMSVCDVLRTVSAEEHSHDENHVHEKDDFEAEFGDETDSQSFSQGTEEDHIEVREQSSFVKPTAVHHAKDLPTLRIFYCVSCGYKQAFDQFTTFAKEKYPNMPIEGANFAPVLWKAYVAQALSFVKMAVLVLVLGGINPFERFGLGYPQILQHAHGNKMSSCMLVFMLGNLVEQSLISTGAFEVYLGNEQIWSKIESGRVPSPQEFMQLIDAQLAVLGKAPVNTESFGEFQQTV.

The N-terminal stretch at 1–26 is a signal peptide; it reads MSRFGVFIIGVLFFMSVCDVLRTVSA. C92 and C95 are disulfide-bonded.

It belongs to the SelWTH family. SELT subfamily. As to expression, broadly expressed in neurons of nervous system including ADL, ASH, ASI, ASJ, ASK and AWB amphid sensilla neurons, in epithelial cells including hypodermal, arcade, pharyngeal, vulval and rectal cells, and in somatic muscle cells of the head, neck and body wall, and non-striated pharyngeal muscles.

The protein resides in the endoplasmic reticulum. It carries out the reaction [thioredoxin]-dithiol + NADP(+) = [thioredoxin]-disulfide + NADPH + H(+). Probably has thioredoxin reductase-like oxidoreductase activity. Plays a role in regulating the oxidative stress response, and odorant and pathogenic bacteria avoidance behavior. The chain is Thioredoxin reductase-like selenoprotein T homolog selt-1.1 from Caenorhabditis elegans.